A 602-amino-acid chain; its full sequence is Threonine--tRNA ligase (602 aa).

The catalytic stretch occupies residues 208-499 (DHRKLGIELK…LTEHCAGEFP (292 aa)). The Zn(2+) site is built by Cys-300, His-351, and His-476.

The protein belongs to the class-II aminoacyl-tRNA synthetase family. In terms of assembly, homodimer. It depends on Zn(2+) as a cofactor.

It localises to the cytoplasm. It catalyses the reaction tRNA(Thr) + L-threonine + ATP = L-threonyl-tRNA(Thr) + AMP + diphosphate + H(+). Functionally, catalyzes the attachment of threonine to tRNA(Thr) in a two-step reaction: L-threonine is first activated by ATP to form Thr-AMP and then transferred to the acceptor end of tRNA(Thr). Also edits incorrectly charged L-seryl-tRNA(Thr). In Campylobacter jejuni subsp. doylei (strain ATCC BAA-1458 / RM4099 / 269.97), this protein is Threonine--tRNA ligase.